Here is a 490-residue protein sequence, read N- to C-terminus: Cyclin-T1-3 (490 aa).

2 disordered regions span residues 275-391 (RVAP…GDVA) and 414-490 (AAED…RLRS). 2 stretches are compositionally biased toward polar residues: residues 282–298 (QGND…NQRA) and 352–365 (TANS…SSTM). Basic and acidic residues-rich tracts occupy residues 367-391 (AMKK…GDVA) and 457-490 (QEYR…RLRS).

Belongs to the cyclin family. Cyclin T subfamily.

In Oryza sativa subsp. japonica (Rice), this protein is Cyclin-T1-3 (CYCT1-3).